A 488-amino-acid chain; its full sequence is Bifunctional protein HldE (488 aa).

A ribokinase region spans residues 1 to 327; it reads MDDTLAKLPR…GLAHGEHADP (327 aa). An ATP-binding site is contributed by 201-204; that stretch reads NRRE. The active site involves Asp-272. The cytidylyltransferase stretch occupies residues 354-488; sequence FTNGCFDLLH…GRMNAPAVGG (135 aa).

The protein in the N-terminal section; belongs to the carbohydrate kinase PfkB family. It in the C-terminal section; belongs to the cytidylyltransferase family. Homodimer.

It catalyses the reaction D-glycero-beta-D-manno-heptose 7-phosphate + ATP = D-glycero-beta-D-manno-heptose 1,7-bisphosphate + ADP + H(+). It carries out the reaction D-glycero-beta-D-manno-heptose 1-phosphate + ATP + H(+) = ADP-D-glycero-beta-D-manno-heptose + diphosphate. It participates in nucleotide-sugar biosynthesis; ADP-L-glycero-beta-D-manno-heptose biosynthesis; ADP-L-glycero-beta-D-manno-heptose from D-glycero-beta-D-manno-heptose 7-phosphate: step 1/4. The protein operates within nucleotide-sugar biosynthesis; ADP-L-glycero-beta-D-manno-heptose biosynthesis; ADP-L-glycero-beta-D-manno-heptose from D-glycero-beta-D-manno-heptose 7-phosphate: step 3/4. Functionally, catalyzes the phosphorylation of D-glycero-D-manno-heptose 7-phosphate at the C-1 position to selectively form D-glycero-beta-D-manno-heptose-1,7-bisphosphate. Its function is as follows. Catalyzes the ADP transfer from ATP to D-glycero-beta-D-manno-heptose 1-phosphate, yielding ADP-D-glycero-beta-D-manno-heptose. The chain is Bifunctional protein HldE from Caulobacter sp. (strain K31).